The sequence spans 216 residues: uncharacterized protein (216 aa).

6 helical membrane passes run 12–32, 48–68, 74–94, 134–154, 156–176, and 191–211; these read YVLGVVFVILLPGPNSLFVLA, GVFLGDAVLMLLSALGVASLL, LFIGLKYLGAAYLFYLGVGML, ILFFISFFIQFVDPGYAYPGL, FLVLAVILELVSALYLSFLIF, and LAAGATSGVGALFVGFGVKLA.

Belongs to the Rht family.

Its subcellular location is the cell membrane. This is an uncharacterized protein from Pseudomonas aeruginosa (strain ATCC 15692 / DSM 22644 / CIP 104116 / JCM 14847 / LMG 12228 / 1C / PRS 101 / PAO1).